The chain runs to 678 residues: Pescadillo homolog (678 aa).

Over residues 283-303 (EEEEPEEVDSEAGDEDDDDLP) the composition is skewed to acidic residues. A disordered region spans residues 283–316 (EEEEPEEVDSEAGDEDDDDLPVLDSGTRRRRAAA). The region spanning 361-451 (VCGSLFRGRV…VLMPTDLYAP (91 aa)) is the BRCT domain. A coiled-coil region spans residues 552 to 587 (MTRKARKMYNNMKQKEAAKQERVQQLESKKAKLAAT). The tract at residues 563–678 (MKQKEAAKQE…DAAPAKRQRR (116 aa)) is disordered. Residues 564–581 (KQKEAAKQERVQQLESKK) are compositionally biased toward basic and acidic residues. Composition is skewed to low complexity over residues 597-618 (KPAA…VAAS) and 630-661 (APAP…AAKE). Residues 662–672 (APAKGGKDAAP) show a composition bias toward basic and acidic residues.

It belongs to the pescadillo family.

The protein resides in the nucleus. Its subcellular location is the nucleolus. It localises to the nucleoplasm. Its function is as follows. Required for maturation of ribosomal RNAs and formation of the large ribosomal subunit. The chain is Pescadillo homolog from Chlamydomonas reinhardtii (Chlamydomonas smithii).